The sequence spans 1101 residues: Isoleucine--tRNA ligase (1101 aa).

A 'HIGH' region motif is present at residues 50–60; sequence PFANGLPHYGH. Residues 629–633 carry the 'KMSKS' region motif; it reads KLSKR. K632 serves as a coordination point for ATP.

Belongs to the class-I aminoacyl-tRNA synthetase family. IleS type 2 subfamily. Monomer. Zn(2+) is required as a cofactor.

It localises to the cytoplasm. It carries out the reaction tRNA(Ile) + L-isoleucine + ATP = L-isoleucyl-tRNA(Ile) + AMP + diphosphate. In terms of biological role, catalyzes the attachment of isoleucine to tRNA(Ile). As IleRS can inadvertently accommodate and process structurally similar amino acids such as valine, to avoid such errors it has two additional distinct tRNA(Ile)-dependent editing activities. One activity is designated as 'pretransfer' editing and involves the hydrolysis of activated Val-AMP. The other activity is designated 'posttransfer' editing and involves deacylation of mischarged Val-tRNA(Ile). The chain is Isoleucine--tRNA ligase from Anaplasma marginale (strain St. Maries).